The following is a 720-amino-acid chain: Polyribonucleotide nucleotidyltransferase (720 aa).

Positions 484 and 490 each coordinate Mg(2+). The 60-residue stretch at 551–610 (PRMYKISIDPSKIGSVIGSGGKTIRSIIEQTNTTVDIENDGTVVIGATDEASAQKAIKII) folds into the KH domain. Residues 620–688 (GSVYTGKVTR…SQGRINLSRR (69 aa)) enclose the S1 motif domain. Positions 697-720 (PISRNRDSQPRRSGPFRPQDRSNS) are disordered.

Belongs to the polyribonucleotide nucleotidyltransferase family. Mg(2+) is required as a cofactor.

It is found in the cytoplasm. It carries out the reaction RNA(n+1) + phosphate = RNA(n) + a ribonucleoside 5'-diphosphate. Functionally, involved in mRNA degradation. Catalyzes the phosphorolysis of single-stranded polyribonucleotides processively in the 3'- to 5'-direction. This Dehalococcoides mccartyi (strain ATCC BAA-2266 / KCTC 15142 / 195) (Dehalococcoides ethenogenes (strain 195)) protein is Polyribonucleotide nucleotidyltransferase.